A 735-amino-acid chain; its full sequence is MKLRLFTSGILGDDKRSMETTQDLWFFRIVHDFFATFEGVSVYQKIFASHFGQIALIFLWASGNLFYVSSQGNFEQWVSDPLHTRPIAHAIWDPQFGQSAVAAYTRAGASGPVTLSTSGLYQWWYTIGMRSNDDLSTASMFLLILSVLFLIAGFIHGYVPLFKPSLAFFKDAESRLNHHLSALFGVSSLAWTGHLIHVAIPESRGQHIRWNNYLSTLPHPDGLAPFFSGNWSAYSTNPDTFNHVFGTSNGAGSAILTFQGGLNPQTGSLWLTDIAHHHLAIAVLFIVAGHMYKTNWSIGHNLQELVEGHNIINGRFNHKGLYQTVNTCLNLQLALALAAVGTICSLVAQHMYSLPAYAYMAQDYVTQAALYTHHQYIAGFIMCGAFAHGTIFLVTEYDPEINADNVLARFLENREVIISHLSWVCLFLGFHTLGLYVHNDVMLAFETPEKQILIEPIFAQYIQAAQGKSSYDFNVLLSSSVSDAYLIPTQSANKGIWLSGWLNSINNNTNSLFIEIGPGDFLVHHAIALGLHTTTLILVKGALDARGSKLMPDKKRFGYGFPCDGPGRGGTCDISAWDAFYLAIFWMLNTIGWVTFYWHWKHLGIWQGNTKQFYESSTYLMGWLRDYLWLNSSQLINGYNPLGMNALSVWSWMFLFGHLIYATGFMFLISWRGYWQELIETLVWAHDRLPIVLWPEKPVALTIVQARFVGLIHFTVGYILTYAAFLIASTSGKFS.

A run of 8 helical transmembrane segments spans residues 46 to 69, 135 to 158, 176 to 200, 274 to 292, 329 to 352, 368 to 394, 416 to 438, and 521 to 539; these read IFAS…FYVS, LSTA…IHGY, LNHH…HVAI, IAHH…GHMY, LNLQ…QHMY, AALY…IFLV, VIIS…LYVH, and FLVH…LILV. The [4Fe-4S] cluster site is built by C563 and C572. 2 helical membrane-spanning segments follow: residues 579-600 and 647-669; these read AFYL…YWHW and LSVW…MFLI. Chlorophyll a contacts are provided by H658, M666, and Y674. W675 contacts phylloquinone. The chain crosses the membrane as a helical span at residues 708–728; sequence FVGLIHFTVGYILTYAAFLIA.

It belongs to the PsaA/PsaB family. The PsaA/B heterodimer binds the P700 chlorophyll special pair and subsequent electron acceptors. PSI consists of a core antenna complex that captures photons, and an electron transfer chain that converts photonic excitation into a charge separation. The eukaryotic PSI reaction center is composed of at least 11 subunits. The cofactor is P700 is a chlorophyll a/chlorophyll a' dimer, A0 is one or more chlorophyll a, A1 is one or both phylloquinones and FX is a shared 4Fe-4S iron-sulfur center..

Its subcellular location is the plastid. It localises to the chloroplast thylakoid membrane. The enzyme catalyses reduced [plastocyanin] + hnu + oxidized [2Fe-2S]-[ferredoxin] = oxidized [plastocyanin] + reduced [2Fe-2S]-[ferredoxin]. Functionally, psaA and PsaB bind P700, the primary electron donor of photosystem I (PSI), as well as the electron acceptors A0, A1 and FX. PSI is a plastocyanin/cytochrome c6-ferredoxin oxidoreductase, converting photonic excitation into a charge separation, which transfers an electron from the donor P700 chlorophyll pair to the spectroscopically characterized acceptors A0, A1, FX, FA and FB in turn. Oxidized P700 is reduced on the lumenal side of the thylakoid membrane by plastocyanin or cytochrome c6. The chain is Photosystem I P700 chlorophyll a apoprotein A2 from Bigelowiella natans (Pedinomonas minutissima).